The sequence spans 181 residues: Adenine phosphoribosyltransferase (181 aa).

The protein belongs to the purine/pyrimidine phosphoribosyltransferase family. In terms of assembly, homodimer.

Its subcellular location is the cytoplasm. It carries out the reaction AMP + diphosphate = 5-phospho-alpha-D-ribose 1-diphosphate + adenine. It participates in purine metabolism; AMP biosynthesis via salvage pathway; AMP from adenine: step 1/1. In terms of biological role, catalyzes a salvage reaction resulting in the formation of AMP, that is energically less costly than de novo synthesis. The protein is Adenine phosphoribosyltransferase of Colwellia psychrerythraea (strain 34H / ATCC BAA-681) (Vibrio psychroerythus).